The sequence spans 379 residues: Sulfate adenylyltransferase (379 aa).

It belongs to the sulfate adenylyltransferase family.

It carries out the reaction sulfate + ATP + H(+) = adenosine 5'-phosphosulfate + diphosphate. It functions in the pathway sulfur metabolism; hydrogen sulfide biosynthesis; sulfite from sulfate: step 1/3. The polypeptide is Sulfate adenylyltransferase (sat) (Pyrococcus abyssi (strain GE5 / Orsay)).